A 353-amino-acid chain; its full sequence is Protein RecA (353 aa).

ATP is bound at residue 75-82 (GPESSGKT).

Belongs to the RecA family.

The protein resides in the cytoplasm. Its function is as follows. Can catalyze the hydrolysis of ATP in the presence of single-stranded DNA, the ATP-dependent uptake of single-stranded DNA by duplex DNA, and the ATP-dependent hybridization of homologous single-stranded DNAs. It interacts with LexA causing its activation and leading to its autocatalytic cleavage. The protein is Protein RecA of Cupriavidus pinatubonensis (strain JMP 134 / LMG 1197) (Cupriavidus necator (strain JMP 134)).